The primary structure comprises 115 residues: Protamine-2 (115 aa).

The interval 1-115 (MVRCHVKSPT…RRRRRCGRQL (115 aa)) is disordered. Phosphoserine is present on Ser8. Residues 24–38 (ETEHPDQARELRPED) show a composition bias toward basic and acidic residues. Composition is skewed to basic residues over residues 44–79 (RTHR…RRRG) and 102–115 (RRMR…GRQL).

It belongs to the protamine P2 family. Interacts with TDRP. In terms of processing, proteolytic processing into mature chains is required for histone eviction during spermatogenesis. Transition proteins (TNP1 and TNP2) are required for processing. In terms of tissue distribution, testis.

It is found in the nucleus. The protein localises to the chromosome. In terms of biological role, protamines substitute for histones in the chromatin of sperm during the haploid phase of spermatogenesis. They compact sperm DNA into a highly condensed, stable and inactive complex. This is Protamine-2 (PRM2) from Bos taurus (Bovine).